We begin with the raw amino-acid sequence, 913 residues long: MGPEALSSLLLLLLVASGDADMKGHFDPAKCRYALGMQDRTIPDSDISASSSWSDSTAARHSRLESSDGDGAWCPAGSVFPKEEEYLQVDLQRLHLVALVGTQGRHAGGLGKEFSRSYRLRYSRDGRRWMGWKDRWGQEVISGNEDPEGVVLKDLGPPMVARLVRFYPRADRVMSVCLRVELYGCLWRDGLLSYTAPVGQTMYLSEAVYLNDSTYDGHTVGGLQYGGLGQLADGVVGLDDFRKSQELRVWPGYDYVGWSNHSFSSGYVEMEFEFDRLRAFQAMQVHCNNMHTLGARLPGGVECRFRRGPAMAWEGEPMRHNLGGNLGDPRARAVSVPLGGRVARFLQCRFLFAGPWLLFSEISFISDVVNNSSPALGGTFPPAPWWPPGPPPTNFSSLELEPRGQQPVAKAEGSPTAILIGCLVAIILLLLLIIALMLWRLHWRRLLSKAERRVLEEELTVHLSVPGDTILINNRPGPREPPPYQEPRPRGNPPHSAPCVPNGSALLLSNPAYRLLLATYARPPRGPGPPTPAWAKPTNTQAYSGDYMEPEKPGAPLLPPPPQNSVPHYAEADIVTLQGVTGGNTYAVPALPPGAVGDGPPRVDFPRSRLRFKEKLGEGQFGEVHLCEVDSPQDLVSLDFPLNVRKGHPLLVAVKILRPDATKNARNDFLKEVKIMSRLKDPNIIRLLGVCVQDDPLCMITDYMENGDLNQFLSAHQLEDKAAEGAPGDGQAAQGPTISYPMLLHVAAQIASGMRYLATLNFVHRDLATRNCLVGENFTIKIADFGMSRNLYAGDYYRVQGRAVLPIRWMAWECILMGKFTTASDVWAFGVTLWEVLMLCRAQPFGQLTDEQVIENAGEFFRDQGRQVYLSRPPACPQGLYELMLRCWSRESEQRPPFSQLHRFLAEDALNTV.

Positions 1–18 (MGPEALSSLLLLLLVASG) are cleaved as a signal peptide. Residues 21–417 (DMKGHFDPAK…VAKAEGSPTA (397 aa)) lie on the Extracellular side of the membrane. Positions 31–185 (CRYALGMQDR…VCLRVELYGC (155 aa)) constitute an F5/8 type C domain. 2 cysteine pairs are disulfide-bonded: Cys-31–Cys-185 and Cys-74–Cys-177. A DS-like domain region spans residues 192–367 (LSYTAPVGQT…LFSEISFISD (176 aa)). The Ca(2+) site is built by Asn-211, Gln-230, Asp-233, Val-235, Tyr-253, and Tyr-255. N-linked (GlcNAc...) asparagine glycosylation is present at Asn-211. The N-linked (GlcNAc...) asparagine glycan is linked to Asn-260. An intrachain disulfide couples Cys-303 to Cys-348. 2 residues coordinate Ca(2+): Ser-360 and Glu-361. Asn-370 and Asn-394 each carry an N-linked (GlcNAc...) asparagine glycan. A helical transmembrane segment spans residues 418 to 438 (ILIGCLVAIILLLLLIIALML). The Cytoplasmic segment spans residues 439–913 (WRLHWRRLLS…FLAEDALNTV (475 aa)). The tract at residues 470 to 499 (ILINNRPGPREPPPYQEPRPRGNPPHSAPC) is disordered. The span at 479-496 (REPPPYQEPRPRGNPPHS) shows a compositional bias: pro residues. A PPxY motif motif is present at residues 481 to 484 (PPPY). Phosphotyrosine; by autocatalysis occurs at positions 484, 513, and 520. The Protein kinase domain maps to 610 to 905 (LRFKEKLGEG…PPFSQLHRFL (296 aa)). 616 to 624 (LGEGQFGEV) is an ATP binding site. At Ser-631 the chain carries Phosphoserine. Lys-655 provides a ligand contact to ATP. Residue Tyr-740 is modified to Phosphotyrosine; by autocatalysis. The Proton acceptor role is filled by Asp-766. A phosphotyrosine; by autocatalysis mark is found at Tyr-792, Tyr-796, and Tyr-797.

Belongs to the protein kinase superfamily. Tyr protein kinase family. Insulin receptor subfamily. In terms of assembly, homodimer. Interacts (via PPxY motif) with WWC1 (via WW domains) in a collagen-regulated manner. Forms a tripartite complex with WWC1 and PRKCZ, but predominantly in the absence of collagen. Interacts (tyrosine phosphorylated) with SHC1. Interacts with SRC. Interacts with MYH9. Interacts with CDH1. Interacts with PTPN11. Interacts with NCK2. Post-translationally, autophosphorylated in response to fibrillar collagen binding. In terms of processing, glycosylation of Asn-211, but apparently not of Asn-260 or Asn-394, prevents autophosphorylation from occurring in the absence of collagen. Detected in T-47D, MDA-MB-175 and HBL-100 breast carcinoma cells, A-431 epidermoid carcinoma cells, SW48 and SNU-C2B colon carcinoma cells and Hs 294T melanoma cells (at protein level). Expressed at low levels in most adult tissues and is highest in the brain, lung, placenta and kidney. Lower levels of expression are detected in melanocytes, heart, liver, skeletal muscle and pancreas. Abundant in breast carcinoma cell lines. In the colonic mucosa, expressed in epithelia but not in the connective tissue of the lamina propria. In the thyroid gland, expressed in the epithelium of the thyroid follicles. In pancreas, expressed in the islets of Langerhans cells, but not in the surrounding epithelial cells of the exocrine pancreas. In kidney, expressed in the epithelia of the distal tubules. Not expressed in connective tissue, endothelial cells, adipose tissue, muscle cells or cells of hematopoietic origin.

It localises to the cell membrane. It is found in the secreted. The enzyme catalyses L-tyrosyl-[protein] + ATP = O-phospho-L-tyrosyl-[protein] + ADP + H(+). Its activity is regulated as follows. Inhibited by the multi-targeted cancer drugs imatinib and ponatinib. In terms of biological role, tyrosine kinase that functions as a cell surface receptor for fibrillar collagen and regulates cell attachment to the extracellular matrix, remodeling of the extracellular matrix, cell migration, differentiation, survival and cell proliferation. Collagen binding triggers a signaling pathway that involves SRC and leads to the activation of MAP kinases. Regulates remodeling of the extracellular matrix by up-regulation of the matrix metalloproteinases MMP2, MMP7 and MMP9, and thereby facilitates cell migration and wound healing. Required for normal blastocyst implantation during pregnancy, for normal mammary gland differentiation and normal lactation. Required for normal ear morphology and normal hearing. Promotes smooth muscle cell migration, and thereby contributes to arterial wound healing. Also plays a role in tumor cell invasion. Phosphorylates PTPN11. This chain is Epithelial discoidin domain-containing receptor 1 (DDR1), found in Homo sapiens (Human).